Here is a 259-residue protein sequence, read N- to C-terminus: MTIKIHTEKDFIKMRAAGKLAAETLDFITDHVKPNVTTNSLNDLCHNFITSHNAIPAPLNYKGFPKSICTSINHVVCHGIPNDKPLKNGDIVNIDVTVILDGWYGDTSRMYYVGDVAIKPKRLIQVTYDAMMKGIEVVRPGAKLGDIGYAIQSYAEKHNYSVVRDYTGHGIGRVFHDKPSILNYGRNGTGLTLKEGMFFTVEPMINAGNYDTILSKLDGWTVTTRDKSLSAQFEHTIGVTKDGFEIFTLSPKKLDYPPY.

His78 is a substrate binding site. Positions 95, 106, and 169 each coordinate a divalent metal cation. His176 provides a ligand contact to substrate. A divalent metal cation is bound at residue Glu202. Trp220 is a substrate binding site. Glu234 lines the a divalent metal cation pocket.

It belongs to the peptidase M24A family. Methionine aminopeptidase type 1 subfamily. Monomer. It depends on Co(2+) as a cofactor. The cofactor is Zn(2+). Mn(2+) is required as a cofactor. Requires Fe(2+) as cofactor.

It catalyses the reaction Release of N-terminal amino acids, preferentially methionine, from peptides and arylamides.. Functionally, removes the N-terminal methionine from nascent proteins. The N-terminal methionine is often cleaved when the second residue in the primary sequence is small and uncharged (Met-Ala-, Cys, Gly, Pro, Ser, Thr, or Val). Requires deformylation of the N(alpha)-formylated initiator methionine before it can be hydrolyzed. In Rickettsia prowazekii (strain Madrid E), this protein is Methionine aminopeptidase.